The following is a 732-amino-acid chain: Catalase-peroxidase (732 aa).

The interval 1–20 (MDKDSKRPVVGSTVRGGMSN) is disordered. A cross-link (tryptophyl-tyrosyl-methioninium (Trp-Tyr) (with M-246)) is located at residues 92 to 220 (WHSAGTYRMG…LAAVQMGLIY (129 aa)). Residue His93 is the Proton acceptor of the active site. Positions 220–246 (YVNPEGPDGNPDPVAAGYDVIETFARM) form a cross-link, tryptophyl-tyrosyl-methioninium (Tyr-Met) (with W-92). His261 provides a ligand contact to heme b.

This sequence belongs to the peroxidase family. Peroxidase/catalase subfamily. Homodimer or homotetramer. Heme b serves as cofactor. In terms of processing, formation of the three residue Trp-Tyr-Met cross-link is important for the catalase, but not the peroxidase activity of the enzyme.

It carries out the reaction H2O2 + AH2 = A + 2 H2O. It catalyses the reaction 2 H2O2 = O2 + 2 H2O. Functionally, bifunctional enzyme with both catalase and broad-spectrum peroxidase activity. The chain is Catalase-peroxidase from Desulfosudis oleivorans (strain DSM 6200 / JCM 39069 / Hxd3) (Desulfococcus oleovorans).